The chain runs to 459 residues: Putrescine aminotransferase (459 aa).

Pyridoxal 5'-phosphate is bound by residues 150–151 (GT) and glutamine 274. Position 300 is an N6-(pyridoxal phosphate)lysine (lysine 300). A pyridoxal 5'-phosphate-binding site is contributed by threonine 332.

The protein belongs to the class-III pyridoxal-phosphate-dependent aminotransferase family. Putrescine aminotransferase subfamily. The cofactor is pyridoxal 5'-phosphate.

The catalysed reaction is an alkane-alpha,omega-diamine + 2-oxoglutarate = an omega-aminoaldehyde + L-glutamate. It catalyses the reaction putrescine + 2-oxoglutarate = 1-pyrroline + L-glutamate + H2O. It carries out the reaction cadaverine + 2-oxoglutarate = 5-aminopentanal + L-glutamate. The protein operates within amine and polyamine degradation; putrescine degradation; 4-aminobutanal from putrescine (transaminase route): step 1/1. Functionally, catalyzes the aminotransferase reaction from putrescine to 2-oxoglutarate, leading to glutamate and 4-aminobutanal, which spontaneously cyclizes to form 1-pyrroline. This is the first step in one of two pathways for putrescine degradation, where putrescine is converted into 4-aminobutanoate (gamma-aminobutyrate or GABA) via 4-aminobutanal. Also functions as a cadaverine transaminase in a a L-lysine degradation pathway to succinate that proceeds via cadaverine, glutarate and L-2-hydroxyglutarate. The chain is Putrescine aminotransferase from Salmonella paratyphi B (strain ATCC BAA-1250 / SPB7).